A 318-amino-acid polypeptide reads, in one-letter code: tRNA-cytidine(32) 2-sulfurtransferase (318 aa).

The PP-loop motif signature appears at 52 to 57 (SGGKDS). Residues C127, C130, and C218 each contribute to the [4Fe-4S] cluster site.

It belongs to the TtcA family. In terms of assembly, homodimer. The cofactor is Mg(2+). It depends on [4Fe-4S] cluster as a cofactor.

The protein resides in the cytoplasm. The enzyme catalyses cytidine(32) in tRNA + S-sulfanyl-L-cysteinyl-[cysteine desulfurase] + AH2 + ATP = 2-thiocytidine(32) in tRNA + L-cysteinyl-[cysteine desulfurase] + A + AMP + diphosphate + H(+). Its pathway is tRNA modification. In terms of biological role, catalyzes the ATP-dependent 2-thiolation of cytidine in position 32 of tRNA, to form 2-thiocytidine (s(2)C32). The sulfur atoms are provided by the cysteine/cysteine desulfurase (IscS) system. The sequence is that of tRNA-cytidine(32) 2-sulfurtransferase from Actinobacillus pleuropneumoniae serotype 7 (strain AP76).